Reading from the N-terminus, the 540-residue chain is MLRMDTVHRDKGQVVILKKTNYLPYLVNLFIPKLFYPEKIVVARLYINVNKHDKHAAENFKGTETPCFDVPPSLFSDKVPMDKIVFLPTVMLPMGFEAGGVFGPGVLTRRSYPIDLKAAGHKGQTPPLFVGLRMDIQAPTRVKSLLKEVRESQPAQDILMNWVRASNNLINGEQPKEQELRDEFSLSMVFNLPTPPSPPSPYPYGRIPLQFNIYTPDLSNVLLLMSHQRDLTVAILSTVNNPHVPSVAFAAMGDEEECPKFELPLSAFPTFEGVNRPMFLPKRFMPKGFEAGCVLKPGALSDRWFMDNIGRFGPTQPQHNGSITPPLFVGKICREEPTVDMIRNIQLEIEKKASEDATLPAVKPKIDISITKGFMVMETAAEDPKPPKGAYSVQSYEEAFDDGCVVKVAKKVATEATDTRGRDEIRTSCDQPQEKDEGSAEADKKHLSCFHVDSDIDNIAMAMARMGVADISLPAEGEAMPGIDGDRALIQLSHVLEDRNQIRSHTDQLMQDHIFRMNRNRMLALRQPFTCIGCGTQENK.

Positions Ala416–Asp443 are disordered. The span at Thr417 to Asp443 shows a compositional bias: basic and acidic residues.

It belongs to the DM7 family.

In Drosophila sechellia (Fruit fly), this protein is DM7 family protein GM11956.